Reading from the N-terminus, the 105-residue chain is uncharacterized protein (105 aa).

Belongs to the EspC family.

Functionally, may be involved in assembly of the ESX-1 / type VII specialized secretion system (T7SS), which exports several proteins including EsxA and EsxB. Involved in DNA conjugation, in at least recipient strain. This is an uncharacterized protein from Mycolicibacterium smegmatis (strain MKD8) (Mycobacterium smegmatis).